Consider the following 184-residue polypeptide: Photosystem I assembly protein Ycf4 (184 aa).

Transmembrane regions (helical) follow at residues 22–42 and 57–77; these read FCWAFILFLGSLGFLLVGTSS and IIFFPQGIVMSFYGIAGLFIS.

It belongs to the Ycf4 family.

The protein resides in the plastid. Its subcellular location is the chloroplast thylakoid membrane. In terms of biological role, seems to be required for the assembly of the photosystem I complex. The chain is Photosystem I assembly protein Ycf4 from Capsella bursa-pastoris (Shepherd's purse).